The chain runs to 355 residues: Elongation factor Ts (355 aa).

The interval 82-85 (TDFV) is involved in Mg(2+) ion dislocation from EF-Tu.

This sequence belongs to the EF-Ts family.

It is found in the cytoplasm. Its function is as follows. Associates with the EF-Tu.GDP complex and induces the exchange of GDP to GTP. It remains bound to the aminoacyl-tRNA.EF-Tu.GTP complex up to the GTP hydrolysis stage on the ribosome. This Wolinella succinogenes (strain ATCC 29543 / DSM 1740 / CCUG 13145 / JCM 31913 / LMG 7466 / NCTC 11488 / FDC 602W) (Vibrio succinogenes) protein is Elongation factor Ts.